We begin with the raw amino-acid sequence, 63 residues long: Beta-insect depressant toxin Im-3 (63 aa).

In terms of domain architecture, LCN-type CS-alpha/beta spans 1 to 63 (KEGYGVGKDG…KVWESSTNTC (63 aa)). Cystine bridges form between Cys-11/Cys-63, Cys-15/Cys-37, Cys-22/Cys-44, and Cys-26/Cys-46.

Belongs to the long (4 C-C) scorpion toxin superfamily. Sodium channel inhibitor family. Beta subfamily. In terms of tissue distribution, expressed by the venom gland.

It is found in the secreted. Beta toxins bind voltage-independently at site-4 of sodium channels (Nav) and shift the voltage of activation toward more negative potentials thereby affecting sodium channel activation and promoting spontaneous and repetitive firing. Induces paralysis in cricket A.domestica but does not induce death. The chain is Beta-insect depressant toxin Im-3 from Isometrus maculatus (Lesser brown scorpion).